Consider the following 159-residue polypeptide: Nucleotide-binding protein Pmen_0939 (159 aa).

This sequence belongs to the YajQ family.

Functionally, nucleotide-binding protein. In Ectopseudomonas mendocina (strain ymp) (Pseudomonas mendocina), this protein is Nucleotide-binding protein Pmen_0939.